The following is a 442-amino-acid chain: Trigger factor (442 aa).

Positions 162-247 constitute a PPIase FKBP-type domain; that stretch reads GDRMTFDFEG…VKAIESRELP (86 aa).

The protein belongs to the FKBP-type PPIase family. Tig subfamily.

Its subcellular location is the cytoplasm. The enzyme catalyses [protein]-peptidylproline (omega=180) = [protein]-peptidylproline (omega=0). In terms of biological role, involved in protein export. Acts as a chaperone by maintaining the newly synthesized protein in an open conformation. Functions as a peptidyl-prolyl cis-trans isomerase. The sequence is that of Trigger factor from Magnetococcus marinus (strain ATCC BAA-1437 / JCM 17883 / MC-1).